The chain runs to 466 residues: 55 kDa erythrocyte membrane protein (466 aa).

Thr2 bears the N-acetylthreonine mark. Ser13 and Ser19 each carry phosphoserine. Residue Thr49 is modified to Phosphothreonine. Phosphoserine is present on residues Ser52, Ser57, and Ser110. The PDZ domain maps to Leu71 to Gln152. An SH3 domain is found at Ala158–Val228. Position 243 is a phosphoserine (Ser243). Residues Val268–Tyr466 are interaction with PALS1. The 170-residue stretch at Arg282 to Asp451 folds into the Guanylate kinase-like domain.

It belongs to the MAGUK family. Heterodimer with PALS1. Interacts with DLG5 and NF2. Interacts (via guanylate kinase-like domain) with WHRN (via third PDZ domain). In terms of processing, palmitoylated.

It is found in the cell membrane. It localises to the cell projection. The protein resides in the stereocilium. Its function is as follows. Essential regulator of neutrophil polarity. Regulates neutrophil polarization by regulating AKT1 phosphorylation through a mechanism that is independent of PIK3CG activity. The chain is 55 kDa erythrocyte membrane protein (MPP1) from Pongo abelii (Sumatran orangutan).